We begin with the raw amino-acid sequence, 957 residues long: Thioredoxin domain-containing protein 11 (957 aa).

Over residues 1–13 (MSECGGRGGGGGS) the composition is skewed to gly residues. The segment at 1–47 (MSECGGRGGGGGSSSSSDDAEDEGGGGGPAGSGSLSPAPAASSEGRL) is disordered. Positions 32–44 (SGSLSPAPAASSE) are enriched in low complexity. Residues 64–84 (LLCGAVALGCALLLALKFTCS) traverse the membrane as a helical segment. The Thioredoxin 1 domain maps to 91 to 213 (IPAKPPVSFF…IEKFVRRVMK (123 aa)). 2 disulfides stabilise this stretch: Cys-441/Cys-444 and Cys-691/Cys-694. Positions 621–771 (LDPKQALMKF…LLRFILHHSD (151 aa)) constitute a Thioredoxin 2 domain. The stretch at 785 to 889 (AECLQNEAVL…ADASETLLTE (105 aa)) forms a coiled coil. The span at 904-925 (LEGRDGADDRVPPSKARSEHPE) shows a compositional bias: basic and acidic residues. The tract at residues 904–957 (LEGRDGADDRVPPSKARSEHPEPPGAPRLPASTPLPANISSTLASEGSPENRTD) is disordered. Residues 941–951 (NISSTLASEGS) are compositionally biased toward polar residues.

Belongs to the protein disulfide isomerase family. As to quaternary structure, interacts with the cytoplasmic part of DUOX1 and DUOX2. Interacts with TPO and CYBA.

Its subcellular location is the endoplasmic reticulum membrane. Its function is as follows. May act as a redox regulator involved in DUOX proteins folding. The interaction with DUOX1 and DUOX2 suggest that it belongs to a multiprotein complex constituting the thyroid H(2)O(2) generating system. It is however not sufficient to assist DUOX1 and DUOX2 in H(2)O(2) generation. The sequence is that of Thioredoxin domain-containing protein 11 (TXNDC11) from Bos taurus (Bovine).